The primary structure comprises 200 residues: Large ribosomal subunit protein uL4 (200 aa).

The segment at 38–68 (GRQGSKQQKTRSDVRGGGKRPWRQKGTGRAR) is disordered. Residues 54-65 (GGKRPWRQKGTG) are compositionally biased toward basic residues.

This sequence belongs to the universal ribosomal protein uL4 family. Part of the 50S ribosomal subunit.

In terms of biological role, one of the primary rRNA binding proteins, this protein initially binds near the 5'-end of the 23S rRNA. It is important during the early stages of 50S assembly. It makes multiple contacts with different domains of the 23S rRNA in the assembled 50S subunit and ribosome. Functionally, forms part of the polypeptide exit tunnel. The chain is Large ribosomal subunit protein uL4 from Pseudomonas fluorescens (strain Pf0-1).